Consider the following 270-residue polypeptide: Glutamate racemase (270 aa).

Residues D14–S15 and Y46–G47 contribute to the substrate site. Residue C77 is the Proton donor/acceptor of the active site. N78–T79 is a binding site for substrate. The active-site Proton donor/acceptor is the C186. T187–H188 lines the substrate pocket.

It belongs to the aspartate/glutamate racemases family.

The enzyme catalyses L-glutamate = D-glutamate. It participates in cell wall biogenesis; peptidoglycan biosynthesis. Its function is as follows. Provides the (R)-glutamate required for cell wall biosynthesis. The chain is Glutamate racemase from Trichodesmium erythraeum (strain IMS101).